The primary structure comprises 114 residues: Hydrogenase maturation factor HypA (114 aa).

Ni(2+) is bound at residue His2. Zn(2+)-binding residues include Cys73, Cys76, Cys90, and Cys93.

Belongs to the HypA/HybF family.

Its function is as follows. Involved in the maturation of [NiFe] hydrogenases. Required for nickel insertion into the metal center of the hydrogenase. This is Hydrogenase maturation factor HypA from Klebsiella pneumoniae (strain 342).